A 529-amino-acid chain; its full sequence is Bifunctional purine biosynthesis protein PurH (529 aa).

The MGS-like domain maps to 1–148 (MQQRRPIRRA…KNHKDVAIVV (148 aa)).

Belongs to the PurH family.

The enzyme catalyses (6R)-10-formyltetrahydrofolate + 5-amino-1-(5-phospho-beta-D-ribosyl)imidazole-4-carboxamide = 5-formamido-1-(5-phospho-D-ribosyl)imidazole-4-carboxamide + (6S)-5,6,7,8-tetrahydrofolate. The catalysed reaction is IMP + H2O = 5-formamido-1-(5-phospho-D-ribosyl)imidazole-4-carboxamide. The protein operates within purine metabolism; IMP biosynthesis via de novo pathway; 5-formamido-1-(5-phospho-D-ribosyl)imidazole-4-carboxamide from 5-amino-1-(5-phospho-D-ribosyl)imidazole-4-carboxamide (10-formyl THF route): step 1/1. Its pathway is purine metabolism; IMP biosynthesis via de novo pathway; IMP from 5-formamido-1-(5-phospho-D-ribosyl)imidazole-4-carboxamide: step 1/1. The protein is Bifunctional purine biosynthesis protein PurH of Pectobacterium atrosepticum (strain SCRI 1043 / ATCC BAA-672) (Erwinia carotovora subsp. atroseptica).